The sequence spans 114 residues: Probable acid stress chaperone HdeA (114 aa).

The first 26 residues, 1–26 (MIKALFNKNTALAAVAILALSGGAMA), serve as a signal peptide directing secretion. The cysteines at positions 46 and 94 are disulfide-linked.

This sequence belongs to the HdeA family.

Its subcellular location is the periplasm. Functionally, required for optimal acid stress protection. Exhibits a chaperone-like activity only at low pH by suppressing non-specifically the aggregation of denaturated periplasmic proteins. Contributes to acid resistance. Not required for wild-type virulence in the BALB/c mouse model. The chain is Probable acid stress chaperone HdeA from Brucella abortus (strain 2308).